The chain runs to 345 residues: MLSNSSQVILRNSDYFQHQDVLILNYEADTLGLSLLAHAKSVTALALDFNHYLQLAAKEQPQLACFFGHTLPSSFAGKTFDSVIVFFPKAKSLAPYLFELAANHLNIDGQLMIVGDNKGGIKSVAKLIPDCFSAPVKRDNARHCLLYTCQLERQGRDFKLENWLSQYSLSTPQGEIIICNLVGVFSEKHLDLGTELLLSHLPKLEGRVLDFGCGAGVITVALLKAMPKLELECIDINAMALASCELTLQANKLQAKVYPSDGLTQVTGAFDAIISNPPFHDGLTSTTDIATQFVAMSEKQLKSKGIWQIVANRHLPYASTIAQVFGNFDVPAENNKFKLYACRKK.

It belongs to the methyltransferase superfamily. RsmC family. In terms of assembly, monomer.

Its subcellular location is the cytoplasm. It catalyses the reaction guanosine(1207) in 16S rRNA + S-adenosyl-L-methionine = N(2)-methylguanosine(1207) in 16S rRNA + S-adenosyl-L-homocysteine + H(+). In terms of biological role, specifically methylates the guanine in position 1207 of 16S rRNA in the 30S particle. The protein is Ribosomal RNA small subunit methyltransferase C of Shewanella denitrificans (strain OS217 / ATCC BAA-1090 / DSM 15013).